The following is a 205-amino-acid chain: Glycerol-3-phosphate acyltransferase (205 aa).

Helical transmembrane passes span Leu5–Ala25, Ile56–Leu76, Val84–Phe104, Ile114–Leu134, Leu144–Phe164, and His165–His185.

It belongs to the PlsY family. As to quaternary structure, probably interacts with PlsX.

It is found in the cell membrane. The enzyme catalyses an acyl phosphate + sn-glycerol 3-phosphate = a 1-acyl-sn-glycero-3-phosphate + phosphate. It functions in the pathway lipid metabolism; phospholipid metabolism. Catalyzes the transfer of an acyl group from acyl-phosphate (acyl-PO(4)) to glycerol-3-phosphate (G3P) to form lysophosphatidic acid (LPA). This enzyme utilizes acyl-phosphate as fatty acyl donor, but not acyl-CoA or acyl-ACP. The chain is Glycerol-3-phosphate acyltransferase from Shouchella clausii (strain KSM-K16) (Alkalihalobacillus clausii).